Here is a 281-residue protein sequence, read N- to C-terminus: Very long chain fatty acid elongase 7 (281 aa).

Alanine 2 bears the N-acetylalanine mark. Residues 2-27 (AFSDLTSRTVRLYDNWIKDADPRVED) lie on the Lumenal side of the membrane. A helical membrane pass occupies residues 28 to 48 (WLLMSSPLPQTIILGFYVYFV). Residues 49–66 (TSLGPKLMENRKPFELKK) lie on the Cytoplasmic side of the membrane. Residues 67-87 (VMITYNFSIVLFSVYMFYEFI) form a helical membrane-spanning segment. Residues 88–115 (MSGWGTGYSFRCDIVDYSQSPTALRMVR) lie on the Lumenal side of the membrane. A disulfide bridge links cysteine 99 with cysteine 231. A helical transmembrane segment spans residues 116-136 (TCWLYYFSKFIELLDTIFFIL). 3-oxoeicosanoyl-CoA contacts are provided by lysine 124, arginine 137, lysine 139, glutamine 142, and histidine 147. Over 137–142 (RKKNSQ) the chain is Cytoplasmic. Residues 143-162 (VTFLHVFHHTIMPWTWWFGV) traverse the membrane as a helical segment. The short motif at 147–151 (HVFHH) is the HxxHH motif element. Histidine 150 functions as the Nucleophile in the catalytic mechanism. The Lumenal segment spans residues 163–171 (KFAAGGLGT). The helical transmembrane segment at 172–194 (FHAFLNTAVHVVMYSYYGLCALG) threads the bilayer. 4 residues coordinate 3-oxoeicosanoyl-CoA: tyrosine 187, lysine 204, threonine 208, and glutamine 211. Residues 195–206 (PDYQKYLWWKKY) are Cytoplasmic-facing. Residues 207–227 (LTSLQLIQFVLITIHISQFFF) form a helical membrane-spanning segment. Topologically, residues 228–236 (MEDCKYQFP) are lumenal. A helical transmembrane segment spans residues 237–257 (VFQYIIMSYGCIFLLLFLHFW). The Cytoplasmic segment spans residues 258–281 (YRAYTKGQRLPKTVKHGICKNKDH). A 3-oxoeicosanoyl-CoA-binding site is contributed by arginine 266. The Di-lysine motif motif lies at 277-281 (KNKDH).

Belongs to the ELO family. ELOVL7 subfamily. As to quaternary structure, homodimer. Interacts with TECR.

The protein resides in the endoplasmic reticulum membrane. It catalyses the reaction a very-long-chain acyl-CoA + malonyl-CoA + H(+) = a very-long-chain 3-oxoacyl-CoA + CO2 + CoA. It carries out the reaction eicosanoyl-CoA + malonyl-CoA + H(+) = 3-oxodocosanoyl-CoA + CO2 + CoA. The catalysed reaction is (5Z,8Z,11Z,14Z)-eicosatetraenoyl-CoA + malonyl-CoA + H(+) = (7Z,10Z,13Z,16Z)-3-oxodocosatetraenoyl-CoA + CO2 + CoA. The enzyme catalyses (6Z,9Z,12Z)-octadecatrienoyl-CoA + malonyl-CoA + H(+) = (8Z,11Z,14Z)-3-oxoeicosatrienoyl-CoA + CO2 + CoA. It catalyses the reaction (9Z,12Z)-octadecadienoyl-CoA + malonyl-CoA + H(+) = (11Z,14Z)-3-oxoicosa-11,14-dienoyl-CoA + CO2 + CoA. It carries out the reaction (9Z)-octadecenoyl-CoA + malonyl-CoA + H(+) = 3-oxo-(11Z)-eicosenoyl-CoA + CO2 + CoA. The catalysed reaction is octadecanoyl-CoA + malonyl-CoA + H(+) = 3-oxoeicosanoyl-CoA + CO2 + CoA. The enzyme catalyses hexadecanoyl-CoA + malonyl-CoA + H(+) = 3-oxooctadecanoyl-CoA + CO2 + CoA. It catalyses the reaction (9Z,12Z,15Z)-octadecatrienoyl-CoA + malonyl-CoA + H(+) = (11Z,14Z,17Z)-3-oxoeicosatrienoyl-CoA + CO2 + CoA. It functions in the pathway lipid metabolism; fatty acid biosynthesis. Its function is as follows. Catalyzes the first and rate-limiting reaction of the four reactions that constitute the long-chain fatty acids elongation cycle. This endoplasmic reticulum-bound enzymatic process allows the addition of 2 carbons to the chain of long- and very long-chain fatty acids (VLCFAs) per cycle. Condensing enzyme with higher activity toward C18 acyl-CoAs, especially C18:3(n-3) acyl-CoAs and C18:3(n-6)-CoAs. Also active toward C20:4-, C18:0-, C18:1-, C18:2- and C16:0-CoAs, and weakly toward C20:0-CoA. Little or no activity toward C22:0-, C24:0-, or C26:0-CoAs. May participate in the production of saturated and polyunsaturated VLCFAs of different chain lengths that are involved in multiple biological processes as precursors of membrane lipids and lipid mediators. This Bos taurus (Bovine) protein is Very long chain fatty acid elongase 7.